The chain runs to 314 residues: Oxidoreductase NAD-binding domain-containing protein 1 (314 aa).

The signal sequence occupies residues 1-18 (MALVAGSAAYQVLRGVTG). The FAD-binding FR-type domain occupies 63–166 (EIISPAKVCE…VGGEFCFDPQ (104 aa)). Position 180–185 (180–185 (GVGINP)) interacts with NAD(+).

The chain is Oxidoreductase NAD-binding domain-containing protein 1 (oxnad1) from Xenopus tropicalis (Western clawed frog).